Reading from the N-terminus, the 489-residue chain is Rhamnulokinase (489 aa).

An ATP-binding site is contributed by 13-17 (ASSGR). Cysteine 68 and cysteine 222 form a disulfide bridge. Residues glycine 83 and 236–238 (HDT) each bind substrate. Aspartate 237 serves as the catalytic Proton acceptor. Threonine 259 contributes to the ATP binding site. Residue asparagine 296 coordinates substrate. Glutamine 304 is a binding site for ATP. Cysteine 353 and cysteine 370 are oxidised to a cystine. Glycine 402 serves as a coordination point for ATP. An intrachain disulfide couples cysteine 413 to cysteine 417.

The protein belongs to the rhamnulokinase family. Mg(2+) serves as cofactor.

It carries out the reaction L-rhamnulose + ATP = L-rhamnulose 1-phosphate + ADP + H(+). It functions in the pathway carbohydrate degradation; L-rhamnose degradation; glycerone phosphate from L-rhamnose: step 2/3. Involved in the catabolism of L-rhamnose (6-deoxy-L-mannose). Catalyzes the transfer of the gamma-phosphate group from ATP to the 1-hydroxyl group of L-rhamnulose to yield L-rhamnulose 1-phosphate. The polypeptide is Rhamnulokinase (Salmonella typhi).